Consider the following 297-residue polypeptide: Homoserine kinase (297 aa).

82–92 (PVSRGLGSSAA) contributes to the ATP binding site.

This sequence belongs to the GHMP kinase family. Homoserine kinase subfamily.

It localises to the cytoplasm. The catalysed reaction is L-homoserine + ATP = O-phospho-L-homoserine + ADP + H(+). It participates in amino-acid biosynthesis; L-threonine biosynthesis; L-threonine from L-aspartate: step 4/5. In terms of biological role, catalyzes the ATP-dependent phosphorylation of L-homoserine to L-homoserine phosphate. The polypeptide is Homoserine kinase (Clostridium botulinum (strain Kyoto / Type A2)).